The sequence spans 534 residues: Ethanolamine kinase (534 aa).

Ser23 is subject to Phosphoserine.

It belongs to the choline/ethanolamine kinase family.

The protein resides in the cytoplasm. The catalysed reaction is ethanolamine + ATP = phosphoethanolamine + ADP + H(+). It carries out the reaction choline + ATP = phosphocholine + ADP + H(+). It participates in phospholipid metabolism; phosphatidylethanolamine biosynthesis; phosphatidylethanolamine from ethanolamine: step 1/3. Its function is as follows. Catalyzes the committed step of phosphatidylethanolamine synthesis via the CDP-ethanolamine branch of the Kennedy pathway. Also exhibits choline kinase activity, thus contributing to phosphatidylcholine synthesis via the CDP-choline pathway, but its preferred substrate is ethanolamine. In Saccharomyces cerevisiae (strain ATCC 204508 / S288c) (Baker's yeast), this protein is Ethanolamine kinase (EKI1).